A 309-amino-acid polypeptide reads, in one-letter code: tRNA-cytidine(32) 2-sulfurtransferase (309 aa).

The PP-loop motif signature appears at 45–50; sequence SGGKDS. The [4Fe-4S] cluster site is built by Cys120, Cys123, and Cys211.

It belongs to the TtcA family. In terms of assembly, homodimer. Mg(2+) is required as a cofactor. It depends on [4Fe-4S] cluster as a cofactor.

It localises to the cytoplasm. The catalysed reaction is cytidine(32) in tRNA + S-sulfanyl-L-cysteinyl-[cysteine desulfurase] + AH2 + ATP = 2-thiocytidine(32) in tRNA + L-cysteinyl-[cysteine desulfurase] + A + AMP + diphosphate + H(+). Its pathway is tRNA modification. Catalyzes the ATP-dependent 2-thiolation of cytidine in position 32 of tRNA, to form 2-thiocytidine (s(2)C32). The sulfur atoms are provided by the cysteine/cysteine desulfurase (IscS) system. This is tRNA-cytidine(32) 2-sulfurtransferase from Psychromonas ingrahamii (strain DSM 17664 / CCUG 51855 / 37).